The primary structure comprises 91 residues: Ice-structuring protein (91 aa).

The signal sequence occupies residues 1–21; it reads MALSLFTVGQLIFLFWTMRIT. The propeptide at 22 to 39 is removed by a dipeptidylpeptidase; the sequence is EANPDPAAKAVPAAAAPD.

This sequence belongs to the type-I AFP family.

The protein localises to the secreted. Its function is as follows. Contributes to protect fish blood from freezing at subzero sea water temperatures. Lowers the blood freezing point. Binds to nascent ice crystals and prevents further growth. The chain is Ice-structuring protein from Pseudopleuronectes americanus (Winter flounder).